The primary structure comprises 159 residues: NADH-quinone oxidoreductase subunit I (159 aa).

4Fe-4S ferredoxin-type domains lie at 51–80 (RRYENGEERCIACKLCEAICPAQAIVIESD) and 90–119 (TRYDIDMTKCIYCGLCQEACPVDAIVEGPN). [4Fe-4S] cluster is bound by residues Cys-60, Cys-63, Cys-66, Cys-70, Cys-99, Cys-102, Cys-105, and Cys-109.

It belongs to the complex I 23 kDa subunit family. In terms of assembly, NDH-1 is composed of 14 different subunits. Subunits NuoA, H, J, K, L, M, N constitute the membrane sector of the complex. The cofactor is [4Fe-4S] cluster.

Its subcellular location is the cell inner membrane. It carries out the reaction a quinone + NADH + 5 H(+)(in) = a quinol + NAD(+) + 4 H(+)(out). In terms of biological role, NDH-1 shuttles electrons from NADH, via FMN and iron-sulfur (Fe-S) centers, to quinones in the respiratory chain. The immediate electron acceptor for the enzyme in this species is believed to be ubiquinone. Couples the redox reaction to proton translocation (for every two electrons transferred, four hydrogen ions are translocated across the cytoplasmic membrane), and thus conserves the redox energy in a proton gradient. The polypeptide is NADH-quinone oxidoreductase subunit I (Rickettsia prowazekii (strain Madrid E)).